The following is an 89-amino-acid chain: Small ribosomal subunit protein uS14 (89 aa).

Belongs to the universal ribosomal protein uS14 family. In terms of assembly, part of the 30S ribosomal subunit. Contacts proteins S3 and S10.

Binds 16S rRNA, required for the assembly of 30S particles and may also be responsible for determining the conformation of the 16S rRNA at the A site. In Oenococcus oeni (strain ATCC BAA-331 / PSU-1), this protein is Small ribosomal subunit protein uS14.